The primary structure comprises 344 residues: Trace amine-associated receptor 8a (344 aa).

Residues 1-33 (MTSNFSQAPLQLCYENVNASCIKTPYSPGLRVL) lie on the Extracellular side of the membrane. Asn-4 and Asn-18 each carry an N-linked (GlcNAc...) asparagine glycan. Intrachain disulfides connect Cys-21–Cys-185 and Cys-96–Cys-189. The helical transmembrane segment at 34–54 (LYMVFGFGAVLAVCGNLLVVI) threads the bilayer. Over 55–67 (SVLHFKQLHSPAN) the chain is Cytoplasmic. Residues 68-88 (FLIASLASADFLVGISVMPFS) form a helical membrane-spanning segment. Residues 89–102 (MVRSIESCWYFGDT) lie on the Extracellular side of the membrane. The helical transmembrane segment at 103–127 (FCSLHSCCDAAFCYSSLFHLCFISV) threads the bilayer. Over 128–146 (DRYIAVTDPLVYPTKFTVS) the chain is Cytoplasmic. A helical transmembrane segment spans residues 147 to 167 (VSGICISISWILPLVYSSAVF). Over 168–196 (YTGISATGIENLVSALNCVGGCQIVVNQD) the chain is Extracellular. Residues 197–217 (WVLIDFLLFLIPTLVMIILYS) form a helical membrane-spanning segment. The Cytoplasmic segment spans residues 218-260 (KIFLVAKQQAVKIETSISGSKGESSLESHKARVAKRERKAAKT). Residues 261-281 (LGVTVVAFMVSWLPYTIDTLI) form a helical membrane-spanning segment. The Extracellular portion of the chain corresponds to 282–291 (DAFMGFITPA). A helical membrane pass occupies residues 292 to 314 (YVYEICCWSAYYNSAMNPLIYAF). Over 315–344 (FYPWFRKAIKLILSGEILKSHSSTMSLFSE) the chain is Cytoplasmic.

It belongs to the G-protein coupled receptor 1 family.

The protein localises to the cell membrane. Functionally, olfactory receptor activated by trace amines. Trace amine compounds are enriched in animal body fluids and act on trace amine-associated receptors (TAARs) to elicit both intraspecific and interspecific innate behaviors. Ligand-binding causes a conformation change that triggers signaling via G(s)-class of G alpha proteins (GNAL or GNAS). The protein is Trace amine-associated receptor 8a of Rattus norvegicus (Rat).